The chain runs to 186 residues: Ribosome-recycling factor (186 aa).

This sequence belongs to the RRF family.

It localises to the cytoplasm. Responsible for the release of ribosomes from messenger RNA at the termination of protein biosynthesis. May increase the efficiency of translation by recycling ribosomes from one round of translation to another. The polypeptide is Ribosome-recycling factor (Chlorobium chlorochromatii (strain CaD3)).